Reading from the N-terminus, the 486-residue chain is MSTFYTVISWLLVFGYWLLIAGVTLRILMKRRAVPSAMAWLLVIYILPLVGIVAYLSFGELHLGKRRAERASKMWPSTAKWLRELKEYRRIFATENSEVASALFQLCERRQGVGGVKGNQLQLMTTFDDTIKALLRDIELARSNIEMVFYIWQPGGLVEQVSSSLIAAARRGVHCRILLDSAGSVQFFRQHHPELMRTAGIEVVEALKVNLFRAFLRRMDLRQHRKIILIDNRIAYTGSMNMVDPRFFKQDAGVGQWIDLMARIEGPVATTLGIIYCCDWEMETGKRLLPPPPDVNVMPFEQESGHTIQVIASGPGYPEEMIHQALLTSVYSARKQLIMTTPYFVPSDDLLHAICTAAQRGVDVSIIVPHKNDSVLVGWASRAFFTELLAAGVKIYQFKDGLLHTKSVLVDGQLSLVGTVNLDMRSLWLNFEITLVIDDAGFGSDLACVQEDYIARSRLLNATQWQNRPYWQRIVERLFYFFSPLL.

2 helical membrane passes run 3–23 (TFYT…IAGV) and 38–58 (MAWL…YLSF). PLD phosphodiesterase domains lie at 219 to 246 (MDLR…VDPR) and 399 to 426 (KDGL…DMRS). Active-site residues include His-224, Lys-226, Asp-231, His-404, Lys-406, and Asp-411.

Belongs to the phospholipase D family. Cardiolipin synthase subfamily. ClsA sub-subfamily.

The protein resides in the cell inner membrane. It carries out the reaction 2 a 1,2-diacyl-sn-glycero-3-phospho-(1'-sn-glycerol) = a cardiolipin + glycerol. Its function is as follows. Catalyzes the reversible phosphatidyl group transfer from one phosphatidylglycerol molecule to another to form cardiolipin (CL) (diphosphatidylglycerol) and glycerol. This Pectobacterium carotovorum subsp. carotovorum (strain PC1) protein is Cardiolipin synthase A.